The primary structure comprises 317 residues: MATH domain and coiled-coil domain-containing protein At3g58240 (317 aa).

The region spanning 6 to 131 is the MATH domain; that stretch reads DNKFTWVIKN…DGEVEIVAQI (126 aa). Positions 254–305 form a coiled coil; the sequence is KLDWLEKKLDEVKEIKKKCERVTEMEKELHDLMNKHTNVSKLLEKEKLEIKN.

This chain is MATH domain and coiled-coil domain-containing protein At3g58240, found in Arabidopsis thaliana (Mouse-ear cress).